We begin with the raw amino-acid sequence, 375 residues long: Lipid-A-disaccharide synthase (375 aa).

It belongs to the LpxB family.

The enzyme catalyses a lipid X + a UDP-2-N,3-O-bis[(3R)-3-hydroxyacyl]-alpha-D-glucosamine = a lipid A disaccharide + UDP + H(+). It functions in the pathway bacterial outer membrane biogenesis; LPS lipid A biosynthesis. In terms of biological role, condensation of UDP-2,3-diacylglucosamine and 2,3-diacylglucosamine-1-phosphate to form lipid A disaccharide, a precursor of lipid A, a phosphorylated glycolipid that anchors the lipopolysaccharide to the outer membrane of the cell. This Pseudomonas putida (strain GB-1) protein is Lipid-A-disaccharide synthase.